We begin with the raw amino-acid sequence, 350 residues long: Arabinogalactan endo-beta-1,4-galactanase A (350 aa).

The first 17 residues, 1–17, serve as a signal peptide directing secretion; the sequence is MILSSLLPLSLVTLTSA. An N-linked (GlcNAc...) asparagine glycan is attached at N129. The active-site Proton donor is E153. E263 acts as the Nucleophile in catalysis.

This sequence belongs to the glycosyl hydrolase 53 family.

Its subcellular location is the secreted. It carries out the reaction The enzyme specifically hydrolyzes (1-&gt;4)-beta-D-galactosidic linkages in type I arabinogalactans.. Endogalactanase involved in the degradation of plant cell wall polysaccharides, and more particularly of hairy regions of pectin. In Emericella nidulans (strain FGSC A4 / ATCC 38163 / CBS 112.46 / NRRL 194 / M139) (Aspergillus nidulans), this protein is Arabinogalactan endo-beta-1,4-galactanase A (galA).